We begin with the raw amino-acid sequence, 338 residues long: Heme A synthase (338 aa).

5 helical membrane-spanning segments follow: residues 6–26, 93–113, 118–138, 154–174, and 201–221; these read ITKW…IGGI, GRIT…KGII, IAPY…GWYM, LAFH…QLIK, and VIYL…GLIY. Position 256 (His-256) interacts with heme. A run of 3 helical transmembrane segments spans residues 258-278, 285-305, and 308-328; these read LGGY…LKIE, IAYF…ITLL, and VPII…SVII. Position 316 (His-316) interacts with heme.

It belongs to the COX15/CtaA family. Type 2 subfamily. In terms of assembly, interacts with CtaB. Heme b serves as cofactor.

The protein localises to the cell membrane. It catalyses the reaction Fe(II)-heme o + 2 A + H2O = Fe(II)-heme a + 2 AH2. The protein operates within porphyrin-containing compound metabolism; heme A biosynthesis; heme A from heme O: step 1/1. In terms of biological role, catalyzes the conversion of heme O to heme A by two successive hydroxylations of the methyl group at C8. The first hydroxylation forms heme I, the second hydroxylation results in an unstable dihydroxymethyl group, which spontaneously dehydrates, resulting in the formyl group of heme A. In Rickettsia canadensis (strain McKiel), this protein is Heme A synthase.